We begin with the raw amino-acid sequence, 436 residues long: Xylose isomerase (436 aa).

Active-site residues include histidine 100 and aspartate 103. Positions 231, 267, 270, 295, 306, 308, and 338 each coordinate Mg(2+).

This sequence belongs to the xylose isomerase family. In terms of assembly, homotetramer. Requires Mg(2+) as cofactor.

It is found in the cytoplasm. The enzyme catalyses alpha-D-xylose = alpha-D-xylulofuranose. This chain is Xylose isomerase, found in Rhizobium etli (strain ATCC 51251 / DSM 11541 / JCM 21823 / NBRC 15573 / CFN 42).